Here is a 198-residue protein sequence, read N- to C-terminus: Pyridoxal 5'-phosphate synthase subunit PdxT (198 aa).

49–51 (GES) is a binding site for L-glutamine. The Nucleophile role is filled by Cys81. L-glutamine-binding positions include Arg113 and 141-142 (IR). Active-site charge relay system residues include His177 and Glu179.

Belongs to the glutaminase PdxT/SNO family. As to quaternary structure, in the presence of PdxS, forms a dodecamer of heterodimers. Only shows activity in the heterodimer.

It carries out the reaction aldehydo-D-ribose 5-phosphate + D-glyceraldehyde 3-phosphate + L-glutamine = pyridoxal 5'-phosphate + L-glutamate + phosphate + 3 H2O + H(+). The enzyme catalyses L-glutamine + H2O = L-glutamate + NH4(+). Its pathway is cofactor biosynthesis; pyridoxal 5'-phosphate biosynthesis. Its function is as follows. Catalyzes the hydrolysis of glutamine to glutamate and ammonia as part of the biosynthesis of pyridoxal 5'-phosphate. The resulting ammonia molecule is channeled to the active site of PdxS. This chain is Pyridoxal 5'-phosphate synthase subunit PdxT, found in Mycobacterium ulcerans (strain Agy99).